The sequence spans 402 residues: Leucine aminopeptidase 1 (402 aa).

Residues 1 to 18 (MKISNASLLALLLPAASA) form the signal peptide. Positions 19-92 (RFVEQAEQNR…GTFNKRPYKK (74 aa)) are excised as a propeptide. Residues Asn111 and Asn184 are each glycosylated (N-linked (GlcNAc...) asparagine). Residues His192, Asp211, Glu250, and Asp277 each coordinate Zn(2+). A glycan (N-linked (GlcNAc...) asparagine) is linked at Asn304. Cysteines 326 and 330 form a disulfide. His359 serves as a coordination point for Zn(2+).

It belongs to the peptidase M28 family. M28E subfamily. In terms of assembly, monomer. Zn(2+) serves as cofactor.

It localises to the secreted. Functionally, extracellular aminopeptidase that allows assimilation of proteinaceous substrates. In Neurospora crassa (strain ATCC 24698 / 74-OR23-1A / CBS 708.71 / DSM 1257 / FGSC 987), this protein is Leucine aminopeptidase 1 (lap1).